The chain runs to 427 residues: Putative transporter YdfJ (427 aa).

The Cytoplasmic segment spans residues 1–7; sequence MDFQLYS. The next 2 membrane-spanning stretches (helical) occupy residues 8-28 and 29-49; these read LGAA…AMAL and ILAM…AFIF. Over 50–74 the chain is Cytoplasmic; it reads GKMGDRIGRKKVLFITITMMGICTT. Residues 75–95 form a helical membrane-spanning segment; sequence LIGVLPTYAQIGVFAPILLVT. Residues 96–97 lie on the Periplasmic side of the membrane; sequence LR. A helical membrane pass occupies residues 98–118; it reads IIQGLGAGAEISGAGTMLAEY. Residues 119 to 132 are Cytoplasmic-facing; that stretch reads APKGKRGIISSFVA. The chain crosses the membrane as a helical span at residues 133-153; sequence MGTNCGTLSATAIWAFMFFIL. Residues 154-157 are Periplasmic-facing; the sequence is SKEE. The chain crosses the membrane as a helical span at residues 158–178; it reads LLAWGWRIPFLASVVVMVFAI. Residues 179–225 lie on the Cytoplasmic side of the membrane; that stretch reads WLRMNLKESPVFEKVNDSNQPTAKPAPAGSMFQSKSFWLATGLRFGQ. The helical transmembrane segment at 226–246 threads the bilayer; that stretch reads AGNSGLIQTFLAGYLVQTLLF. The Periplasmic portion of the chain corresponds to 247 to 251; that stretch reads NKAIP. The chain crosses the membrane as a helical span at residues 252–272; the sequence is TDALMISSILGFMTIPFLGWL. Over 273–279 the chain is Cytoplasmic; the sequence is SDKIGRR. The chain crosses the membrane as a helical span at residues 280-300; it reads IPYIIMNTSAIVLAWPMLSII. The Periplasmic segment spans residues 301–307; that stretch reads VDKSYAP. A helical membrane pass occupies residues 308–328; the sequence is STIMVALIVIHNCAVLGLFAL. Residues 329–351 are Cytoplasmic-facing; the sequence is ENITMAEMFGCKNRFTRMAISKE. A helical transmembrane segment spans residues 352-372; that stretch reads IGGLIASGFGPILAGIFCTMT. Glu373 is a topological domain (periplasmic). The chain crosses the membrane as a helical span at residues 374–394; sequence SWYPIAIMIMAYSVIGLISAL. The Cytoplasmic portion of the chain corresponds to 395–427; the sequence is KMPEVKDRDLSALEDAAEDQPRVVRAAQPSRSL.

The protein belongs to the major facilitator superfamily. Metabolite:H+ Symporter (MHS) family (TC 2.A.1.6) family.

Its subcellular location is the cell inner membrane. In terms of biological role, when overexpressed in human HEK-293 cells forms an inward rectifying potassium channel. The protein is Putative transporter YdfJ (ydfJ) of Escherichia coli (strain K12).